The following is a 286-amino-acid chain: Urease accessory protein UreD 2 (286 aa).

It belongs to the UreD family. As to quaternary structure, ureD, UreF and UreG form a complex that acts as a GTP-hydrolysis-dependent molecular chaperone, activating the urease apoprotein by helping to assemble the nickel containing metallocenter of UreC. The UreE protein probably delivers the nickel.

The protein localises to the cytoplasm. Required for maturation of urease via the functional incorporation of the urease nickel metallocenter. The sequence is that of Urease accessory protein UreD 2 from Bradyrhizobium sp. (strain BTAi1 / ATCC BAA-1182).